Reading from the N-terminus, the 354-residue chain is Heat-inducible transcription repressor HrcA (354 aa).

This sequence belongs to the HrcA family.

Functionally, negative regulator of class I heat shock genes (grpE-dnaK-dnaJ and groELS operons). Prevents heat-shock induction of these operons. The sequence is that of Heat-inducible transcription repressor HrcA from Herpetosiphon aurantiacus (strain ATCC 23779 / DSM 785 / 114-95).